The chain runs to 557 residues: Carboxypeptidase Y homolog A (557 aa).

The N-terminal stretch at 1–17 (MRVLPAAMLVGAATAAV) is a signal peptide. Residues 18–138 (PPFQQVLGGN…KLEAYDLRVK (121 aa)) constitute a propeptide that is removed on maturation. Disulfide bonds link Cys193-Cys433, Cys327-Cys341, Cys351-Cys374, Cys358-Cys367, and Cys396-Cys403. Asn224 carries N-linked (GlcNAc...) asparagine glycosylation. Ser280 is an active-site residue. Residue Asp472 is part of the active site. The N-linked (GlcNAc...) asparagine glycan is linked to Asn523. His534 is a catalytic residue.

It belongs to the peptidase S10 family.

Its subcellular location is the vacuole. It carries out the reaction Release of a C-terminal amino acid with broad specificity.. Vacuolar carboxypeptidase involved in degradation of small peptides. Digests preferentially peptides containing an aliphatic or hydrophobic residue in P1' position, as well as methionine, leucine or phenylalanine in P1 position of ester substrate. The polypeptide is Carboxypeptidase Y homolog A (cpyA) (Aspergillus niger (strain ATCC MYA-4892 / CBS 513.88 / FGSC A1513)).